A 313-amino-acid chain; its full sequence is Postacrosomal sheath WW domain-binding protein (313 aa).

Positions 8–87 (TESRRGALIP…GLMSDCTIEQ (80 aa)) constitute a GRAM domain. Repeat copies occupy residues 179 to 185 (YGPPPPG), 193 to 199 (YGTPPEG), 207 to 213 (YGAPPMG), 214 to 220 (YGAPPVG), 221 to 227 (YGVPPGG), 228 to 234 (YGVPPGG), 235 to 241 (YGVPPGG), 242 to 248 (YGAPPGG), 249 to 255 (YGVPPGG), 256 to 262 (YGAPPGG), 263 to 269 (YGAPPAG), and 270 to 276 (YGAPPAG). The interval 179–276 (YGPPPPGYTV…PAGYGAPPAG (98 aa)) is 12 X 7 AA tandem repeat of Y-G-X-P-P-X-G. A PPxY motif 1 motif is present at residues 183 to 186 (PPGY). Gly residues predominate over residues 254–264 (GGYGAPPGGYG). Residues 254-313 (GGYGAPPGGYGAPPAGYGAPPAGNEALPPAYEAPSAGNTAASHRSMTAQQETSLPTTSSS) are disordered. The span at 265 to 276 (APPAGYGAPPAG) shows a compositional bias: low complexity. The PPxY motif 2 signature appears at 281–284 (PPAY). A compositionally biased stretch (polar residues) spans 289–313 (AGNTAASHRSMTAQQETSLPTTSSS).

As to expression, expressed in testis.

Functionally, may play a role in meiotic resumption and pronuclear formation, mediated by a WW domain-signaling pathway during fertilization. The chain is Postacrosomal sheath WW domain-binding protein (WBP2NL) from Bos taurus (Bovine).